The primary structure comprises 337 residues: Adenosine deaminase (337 aa).

Zn(2+)-binding residues include H12 and H14. Substrate is bound by residues H14, D16, and G170. H197 provides a ligand contact to Zn(2+). Residue E200 is the Proton donor of the active site. D278 contacts Zn(2+). Position 279 (D279) interacts with substrate.

It belongs to the metallo-dependent hydrolases superfamily. Adenosine and AMP deaminases family. Adenosine deaminase subfamily. Zn(2+) serves as cofactor.

It carries out the reaction adenosine + H2O + H(+) = inosine + NH4(+). The catalysed reaction is 2'-deoxyadenosine + H2O + H(+) = 2'-deoxyinosine + NH4(+). Functionally, catalyzes the hydrolytic deamination of adenosine and 2-deoxyadenosine. This is Adenosine deaminase from Pectobacterium atrosepticum (strain SCRI 1043 / ATCC BAA-672) (Erwinia carotovora subsp. atroseptica).